Consider the following 334-residue polypeptide: Probable aminoacyl tRNA synthase complex-interacting multifunctional protein 2 (334 aa).

The 48-residue stretch at L280 to R327 folds into the GST C-terminal domain.

As to quaternary structure, component of the aminoacyl-tRNA synthase complex which is comprised of a bifunctional glutamyl-prolyl-tRNA synthase, the monospecific isoleucyl, leucyl, glutaminyl, methionyl, lysyl, arginyl and aspartyl-tRNA synthases, and three auxiliary proteins.

The protein resides in the cytoplasm. The protein localises to the cytosol. Its subcellular location is the nucleus. Required for assembly and stability of the aminoacyl-tRNA synthase complex. This is Probable aminoacyl tRNA synthase complex-interacting multifunctional protein 2 from Drosophila melanogaster (Fruit fly).